The sequence spans 1022 residues: Sodium/potassium-transporting ATPase subunit alpha (1022 aa).

The propeptide occupies 1 to 5; it reads MGKGA. Positions 1 to 34 are disordered; it reads MGKGAASEKYQPAATSENAKNSKKSKSKTTDLDE. The Cytoplasmic portion of the chain corresponds to 6–87; the sequence is ASEKYQPAAT…NALTPPPTTP (82 aa). Position 16 is a phosphoserine; by PKC (serine 16). Positions 82–84 are interaction with phosphoinositide-3 kinase; that stretch reads PPP. A helical membrane pass occupies residues 88–108; it reads EWIKFCRQLFGGFSILLWTGA. Residues 109–131 are Lumenal-facing; it reads ILCFLAYGIQVATVDNPANDNLY. Residues 132–152 traverse the membrane as a helical segment; that stretch reads LGVVLSTVVIITGCFSYYQEA. The Cytoplasmic segment spans residues 153-288; it reads KSSKIMDSFK…VGQTPIAAEI (136 aa). A disordered region spans residues 215 to 235; the sequence is NSSLTGESEPQSRSPEYSSEN. A helical membrane pass occupies residues 289–308; the sequence is EHFIHIITGVAVFLGVSFFI. The Lumenal portion of the chain corresponds to 309 to 320; sequence LSLILGYTWLEA. The chain crosses the membrane as a helical span at residues 321–338; it reads VIFLIGIIVANVPEGLLA. Topologically, residues 339–771 are cytoplasmic; sequence TVTVCLTLTA…EEGRLIFDNL (433 aa). Aspartate 376 functions as the 4-aspartylphosphate intermediate in the catalytic mechanism. Mg(2+) is bound by residues aspartate 716 and aspartate 720. The chain crosses the membrane as a helical span at residues 772 to 791; that stretch reads KKSIAYTLTSNIPEITPFLV. Residues 792–801 lie on the Lumenal side of the membrane; it reads FIIANVPLPL. Residues 802–822 form a helical membrane-spanning segment; that stretch reads GTVTILCIDLGTDMVPAISLA. The Cytoplasmic portion of the chain corresponds to 823–842; it reads YERAESDIMKRQPRNPKTDK. Residues 843-865 form a helical membrane-spanning segment; that stretch reads LVNERLISMAYGQIGMIQALGGF. The Lumenal segment spans residues 866 to 917; sequence FSYFVILAENGFLPIDLIGIREKWDELWTQDLEDSYGQQWTYEQRKIVEYTC. A helical transmembrane segment spans residues 918–937; sequence HTSFFVSIVIVQWADLIICK. The Cytoplasmic portion of the chain corresponds to 938 to 950; that stretch reads TRRNSIFQQGMKN. The residue at position 942 (serine 942) is a Phosphoserine; by PKA. A helical membrane pass occupies residues 951–969; sequence KILIFGLFEETALAAFLSY. Topologically, residues 970–984 are lumenal; that stretch reads TPGTDIALRMYPLKP. A helical membrane pass occupies residues 985–1005; sequence SWWFCAFPYSLIIFLYDEARR. Over 1006–1022 the chain is Cytoplasmic; the sequence is FILRRNPGGWVEQETYY.

It belongs to the cation transport ATPase (P-type) (TC 3.A.3) family. Type IIC subfamily. The sodium/potassium-transporting ATPase is composed of a catalytic alpha subunit, an auxiliary non-catalytic beta subunit and an additional regulatory subunit.

The protein resides in the cell membrane. It carries out the reaction K(+)(out) + Na(+)(in) + ATP + H2O = K(+)(in) + Na(+)(out) + ADP + phosphate + H(+). Functionally, this is the catalytic component of the active enzyme, which catalyzes the hydrolysis of ATP coupled with the exchange of sodium and potassium ions across the plasma membrane. This action creates the electrochemical gradient of sodium and potassium ions, providing the energy for active transport of various nutrients. The polypeptide is Sodium/potassium-transporting ATPase subunit alpha (Tetronarce californica (Pacific electric ray)).